The chain runs to 277 residues: Release factor glutamine methyltransferase (277 aa).

S-adenosyl-L-methionine is bound by residues 120–124 (GTGSG), Asp-143, Trp-171, and Asn-186. A substrate-binding site is contributed by 186–189 (NPPY).

Belongs to the protein N5-glutamine methyltransferase family. PrmC subfamily.

It carries out the reaction L-glutaminyl-[peptide chain release factor] + S-adenosyl-L-methionine = N(5)-methyl-L-glutaminyl-[peptide chain release factor] + S-adenosyl-L-homocysteine + H(+). Functionally, methylates the class 1 translation termination release factors RF1/PrfA and RF2/PrfB on the glutamine residue of the universally conserved GGQ motif. The polypeptide is Release factor glutamine methyltransferase (Coxiella burnetii (strain RSA 493 / Nine Mile phase I)).